Here is an 879-residue protein sequence, read N- to C-terminus: Phosphoinositide 3-kinase regulatory subunit 5 (879 aa).

Positions 23 to 100 (SGSTDISSNW…APYIPETSDL (78 aa)) are heterodimerization. 2 disordered regions span residues 314–345 (SLED…PKQD) and 570–590 (SSST…PSPS). A compositionally biased stretch (acidic residues) spans 315–336 (LEDDVTEEDEEVDFEEVDDKDE). Residues 570-589 (SSSTNAPMTNAESPLKSPSP) show a composition bias toward polar residues. Positions 651–751 (PILADMVLYY…WSNGEKVCTS (101 aa)) are interaction with beta-gamma G protein dimers.

As to quaternary structure, heterodimer. Interacts with a catalytic subunit and with beta-gamma G protein dimers.

The protein resides in the nucleus. Its subcellular location is the cytoplasm. The protein localises to the cell membrane. Its activity is regulated as follows. Greatly activated by G gamma proteins. Regulatory subunit of the PI3K gamma complex. Required for recruitment of the catalytic subunit to the plasma membrane via interaction with beta-gamma G protein dimers. Required for G protein-mediated activation of PIK3CG. This chain is Phosphoinositide 3-kinase regulatory subunit 5 (pik3r5), found in Xenopus laevis (African clawed frog).